A 121-amino-acid chain; its full sequence is Nitrogen fixation nifHD region glnB-like protein 2 (121 aa).

The protein belongs to the P(II) protein family.

In terms of biological role, could be involved in the regulation of nitrogen fixation. The sequence is that of Nitrogen fixation nifHD region glnB-like protein 2 (glnBII) from Methanococcus maripaludis (Methanococcus deltae).